We begin with the raw amino-acid sequence, 465 residues long: GTPase Der (465 aa).

2 consecutive EngA-type G domains span residues 3 to 167 and 179 to 352; these read PLVA…PERG and IHIA…VSAL. GTP contacts are provided by residues 9–16, 57–61, 119–122, 185–192, 232–236, and 297–300; these read GRPNVGKS, DTGGM, NKID, DTAGL, and NKWD. A KH-like domain is found at 353–437; sequence RQFSTSEVNK…PVRFLFREGD (85 aa).

This sequence belongs to the TRAFAC class TrmE-Era-EngA-EngB-Septin-like GTPase superfamily. EngA (Der) GTPase family. Associates with the 50S ribosomal subunit.

Functionally, GTPase that plays an essential role in the late steps of ribosome biogenesis. The chain is GTPase Der from Xylella fastidiosa (strain 9a5c).